The chain runs to 58 residues: Large ribosomal subunit protein bL32 (58 aa).

Disordered stretches follow at residues Met-1–Arg-22 and Leu-39–Glu-58.

The protein belongs to the bacterial ribosomal protein bL32 family.

In Crocosphaera subtropica (strain ATCC 51142 / BH68) (Cyanothece sp. (strain ATCC 51142)), this protein is Large ribosomal subunit protein bL32.